Here is a 418-residue protein sequence, read N- to C-terminus: Serine hydroxymethyltransferase (418 aa).

Residues leucine 117 and 121 to 123 (GHL) contribute to the (6S)-5,6,7,8-tetrahydrofolate site. Position 225 is an N6-(pyridoxal phosphate)lysine (lysine 225).

It belongs to the SHMT family. Homodimer. Requires pyridoxal 5'-phosphate as cofactor.

Its subcellular location is the cytoplasm. It carries out the reaction (6R)-5,10-methylene-5,6,7,8-tetrahydrofolate + glycine + H2O = (6S)-5,6,7,8-tetrahydrofolate + L-serine. The protein operates within one-carbon metabolism; tetrahydrofolate interconversion. It functions in the pathway amino-acid biosynthesis; glycine biosynthesis; glycine from L-serine: step 1/1. In terms of biological role, catalyzes the reversible interconversion of serine and glycine with tetrahydrofolate (THF) serving as the one-carbon carrier. This reaction serves as the major source of one-carbon groups required for the biosynthesis of purines, thymidylate, methionine, and other important biomolecules. Also exhibits THF-independent aldolase activity toward beta-hydroxyamino acids, producing glycine and aldehydes, via a retro-aldol mechanism. This is Serine hydroxymethyltransferase from Mycoplasma mobile (strain ATCC 43663 / 163K / NCTC 11711) (Mesomycoplasma mobile).